We begin with the raw amino-acid sequence, 703 residues long: UvrABC system protein B (703 aa).

The Helicase ATP-binding domain maps to 33–419; the sequence is ERIENGENDV…SDGVVEQIIR (387 aa). 46-53 provides a ligand contact to ATP; the sequence is GATGTGKT. Positions 99-122 match the Beta-hairpin motif; the sequence is YYDYYQPEAYIPQTDTYIEKDSNI. Positions 436–589 constitute a Helicase C-terminal domain; that stretch reads QIDDLLAEIK…QIAYNQEHGI (154 aa). The 36-residue stretch at 659 to 694 folds into the UVR domain; it reads ADLIRQLSEQMHTAAEQLQFELAARLRDEIRDLKKE.

Belongs to the UvrB family. As to quaternary structure, forms a heterotetramer with UvrA during the search for lesions. Interacts with UvrC in an incision complex.

Its subcellular location is the cytoplasm. Functionally, the UvrABC repair system catalyzes the recognition and processing of DNA lesions. A damage recognition complex composed of 2 UvrA and 2 UvrB subunits scans DNA for abnormalities. Upon binding of the UvrA(2)B(2) complex to a putative damaged site, the DNA wraps around one UvrB monomer. DNA wrap is dependent on ATP binding by UvrB and probably causes local melting of the DNA helix, facilitating insertion of UvrB beta-hairpin between the DNA strands. Then UvrB probes one DNA strand for the presence of a lesion. If a lesion is found the UvrA subunits dissociate and the UvrB-DNA preincision complex is formed. This complex is subsequently bound by UvrC and the second UvrB is released. If no lesion is found, the DNA wraps around the other UvrB subunit that will check the other stand for damage. This chain is UvrABC system protein B, found in Bifidobacterium longum (strain NCC 2705).